The chain runs to 330 residues: MENVNRIVAEGIAAVEAAQDFNALEQIKARYLGKTGELTGLLKTLGQMSPEERKTIGAHINECKNRFQTAFNAKREALNEVKLQARLAAEALDITLPGRAQEGGSLHPVTLTLQRVVELFHGMGFEVADGPEIEDDFHNFQALNIPANHPARAMQDTFYVENGDVLRTHTSPIQIRYMLDKKEPPIRIIAPGRVYRVDSDATHSPMFHQAEGLWVEEGVTFADLKAVFTDFIRRFFERDDLQVRFRPSFFPFTEPSAEIDIMGENGKWLEVGGCGMVHPNVLKNVNIDPEKYTGFAFGIGLDRFAMLRYNVNDLRLFFDNDLNFLKQFAK.

Glu-254 provides a ligand contact to Mg(2+).

It belongs to the class-II aminoacyl-tRNA synthetase family. Phe-tRNA synthetase alpha subunit type 1 subfamily. Tetramer of two alpha and two beta subunits. Requires Mg(2+) as cofactor.

The protein resides in the cytoplasm. It carries out the reaction tRNA(Phe) + L-phenylalanine + ATP = L-phenylalanyl-tRNA(Phe) + AMP + diphosphate + H(+). This Neisseria meningitidis serogroup B (strain ATCC BAA-335 / MC58) protein is Phenylalanine--tRNA ligase alpha subunit (pheS).